The sequence spans 31 residues: Photosystem II reaction center protein T (31 aa).

A helical membrane pass occupies residues 3 to 23 (SVAYILILTMALAVLFFAIAF).

This sequence belongs to the PsbT family. In terms of assembly, PSII is composed of 1 copy each of membrane proteins PsbA, PsbB, PsbC, PsbD, PsbE, PsbF, PsbH, PsbI, PsbJ, PsbK, PsbL, PsbM, PsbT, PsbX, PsbY, PsbZ, Psb30/Ycf12, peripheral proteins PsbO, CyanoQ (PsbQ), PsbU, PsbV and a large number of cofactors. It forms dimeric complexes.

The protein resides in the cellular thylakoid membrane. Functionally, found at the monomer-monomer interface of the photosystem II (PS II) dimer, plays a role in assembly and dimerization of PSII. PSII is a light-driven water plastoquinone oxidoreductase, using light energy to abstract electrons from H(2)O, generating a proton gradient subsequently used for ATP formation. This is Photosystem II reaction center protein T from Gloeothece citriformis (strain PCC 7424) (Cyanothece sp. (strain PCC 7424)).